Consider the following 154-residue polypeptide: Interleukin-2 (154 aa).

A signal peptide spans 1–20 (MYKLQFLSCIALTLALVANS). Threonine 23 is a glycosylation site (O-linked (GalNAc...) threonine). A disulfide bridge links cysteine 78 with cysteine 126. An N-linked (GlcNAc...) asparagine glycan is attached at asparagine 111.

Belongs to the IL-2 family.

It localises to the secreted. In terms of biological role, cytokine produced by activated CD4-positive helper T-cells and to a lesser extend activated CD8-positive T-cells and natural killer (NK) cells that plays pivotal roles in the immune response and tolerance. Binds to a receptor complex composed of either the high-affinity trimeric IL-2R (IL2RA/CD25, IL2RB/CD122 and IL2RG/CD132) or the low-affinity dimeric IL-2R (IL2RB and IL2RG). Interaction with the receptor leads to oligomerization and conformation changes in the IL-2R subunits resulting in downstream signaling starting with phosphorylation of JAK1 and JAK3. In turn, JAK1 and JAK3 phosphorylate the receptor to form a docking site leading to the phosphorylation of several substrates including STAT5. This process leads to activation of several pathways including STAT, phosphoinositide-3-kinase/PI3K and mitogen-activated protein kinase/MAPK pathways. Functions as a T-cell growth factor and can increase NK-cell cytolytic activity as well. Promotes strong proliferation of activated B-cells and subsequently immunoglobulin production. Plays a pivotal role in regulating the adaptive immune system by controlling the survival and proliferation of regulatory T-cells, which are required for the maintenance of immune tolerance. Moreover, participates in the differentiation and homeostasis of effector T-cell subsets, including Th1, Th2, Th17 as well as memory CD8-positive T-cells. This chain is Interleukin-2 (IL2), found in Camelus bactrianus (Bactrian camel).